Reading from the N-terminus, the 230-residue chain is Heptaprenylglyceryl phosphate synthase (230 aa).

Sn-glycerol 1-phosphate is bound at residue Lys-12. Mg(2+) is bound by residues Asp-14 and Ser-40. Sn-glycerol 1-phosphate contacts are provided by residues 159-164 (YLEYSG), Gly-189, and 209-210 (GN).

Belongs to the GGGP/HepGP synthase family. Group I subfamily. Homodimer. Mg(2+) serves as cofactor.

It catalyses the reaction sn-glycerol 1-phosphate + all-trans-heptaprenyl diphosphate = 3-heptaprenyl-sn-glycero-1-phosphate + diphosphate. The protein operates within membrane lipid metabolism; glycerophospholipid metabolism. Its function is as follows. Prenyltransferase that catalyzes in vivo the transfer of the heptaprenyl moiety of heptaprenyl pyrophosphate (HepPP; 35 carbon atoms) to the C3 hydroxyl of sn-glycerol-1-phosphate (G1P), producing heptaprenylglyceryl phosphate (HepGP). This reaction is an ether-bond-formation step in the biosynthesis of archaea-type G1P-based membrane lipids found in Bacillales. The protein is Heptaprenylglyceryl phosphate synthase of Bacillus pumilus (strain SAFR-032).